The chain runs to 114 residues: Hydrogenase maturation factor HypA (114 aa).

His-2 is a Ni(2+) binding site. 4 residues coordinate Zn(2+): Cys-73, Cys-76, Cys-89, and Cys-92.

This sequence belongs to the HypA/HybF family.

In terms of biological role, involved in the maturation of [NiFe] hydrogenases. Required for nickel insertion into the metal center of the hydrogenase. The sequence is that of Hydrogenase maturation factor HypA from Syntrophus aciditrophicus (strain SB).